The chain runs to 624 residues: Outer dynein arm-docking complex subunit 4 (624 aa).

8 TPR repeats span residues 11-44, 46-78, 79-112, 273-309, 318-351, 358-391, 395-428, and 435-468; these read FPSY…QSGD, NCLV…DPTF, CKGI…RPDR, LKSL…NQEE, GNLY…AKEH, SRAL…AKTT, TWLF…AEEE, and LNAS…AKLV. The segment at 511 to 624 is disordered; it reads MSQMDLQGAS…VQKLEKTKEE (114 aa). 3 stretches are compositionally biased toward basic and acidic residues: residues 520-557, 576-588, and 595-624; these read SEKE…DRKS, IRRE…RRLS, and PSED…TKEE.

As to quaternary structure, component of the outer dynein arm-docking complex along with ODAD1, ODAD2, and ODAD3. Interacts with ODAD1; this interaction may facilitate the recruitment and/or attachment of outer dynein arm docking complex proteins, including ODAD1, ODAD3 and ODAD2, to ciliary axonemes. Interacts with components of the IFT complex A, including IFT140, TTC21B/IFT139 and WDR19/IFT144, and the IFT complex B, including IFT46, IFT52 and IFT57. Interacts with CFAP53.

It is found in the cell projection. The protein localises to the cilium. It localises to the cytoplasm. The protein resides in the cytoskeleton. Its subcellular location is the cilium axoneme. In terms of biological role, component of the outer dynein arm-docking complex (ODA-DC) that mediates outer dynein arms (ODA) binding onto the doublet microtubule. Plays an essential role for the assembly of ODA-DC and for the docking of ODA in ciliary axoneme. This is Outer dynein arm-docking complex subunit 4 (Odad4) from Mus musculus (Mouse).